We begin with the raw amino-acid sequence, 69 residues long: Putative transmembrane protein ORF34 (69 aa).

Transmembrane regions (helical) follow at residues L7–F27 and V42–F62.

The protein resides in the host membrane. The polypeptide is Putative transmembrane protein ORF34 (Haloarcula hispanica (His1V)).